An 83-amino-acid polypeptide reads, in one-letter code: Small ribosomal subunit protein uS17 (83 aa).

Belongs to the universal ribosomal protein uS17 family. In terms of assembly, part of the 30S ribosomal subunit.

Functionally, one of the primary rRNA binding proteins, it binds specifically to the 5'-end of 16S ribosomal RNA. The chain is Small ribosomal subunit protein uS17 from Thermodesulfovibrio yellowstonii (strain ATCC 51303 / DSM 11347 / YP87).